The sequence spans 342 residues: Cytochrome f (342 aa).

Positions 1 to 28 are cleaved as a signal peptide; sequence MKKQWIAGAFGLTAALAGLVSVPQSALA. 3 residues coordinate heme: cysteine 48, cysteine 51, and histidine 52. A helical membrane pass occupies residues 305–325; the sequence is VTWLVAFLAAAFICQLLLVLK.

It belongs to the cytochrome f family. As to quaternary structure, the 4 large subunits of the cytochrome b6-f complex are cytochrome b6, subunit IV (17 kDa polypeptide, PetD), cytochrome f and the Rieske protein, while the 4 small subunits are PetG, PetL, PetM and PetN. The complex functions as a dimer. It depends on heme as a cofactor.

It localises to the cell inner membrane. In terms of biological role, component of the cytochrome b6-f complex, which mediates electron transfer between photosystem II (PSII) and photosystem I (PSI), cyclic electron flow around PSI, and state transitions. The chain is Cytochrome f (petA) from Gloeobacter violaceus (strain ATCC 29082 / PCC 7421).